A 919-amino-acid chain; its full sequence is Chitin synthase 1 (919 aa).

2 disordered regions span residues M1 to T69 and N109 to P134. The span at G11 to D30 shows a compositional bias: low complexity. 2 N-linked (GlcNAc...) asparagine glycosylation sites follow: N187 and N556. Transmembrane regions (helical) follow at residues I594 to I614, L630 to L650, I668 to L688, V713 to A733, F742 to C762, L843 to G863, and I887 to T919.

Belongs to the chitin synthase family. Class III subfamily.

The protein localises to the cell membrane. The protein resides in the cytoplasmic vesicle membrane. It carries out the reaction [(1-&gt;4)-N-acetyl-beta-D-glucosaminyl](n) + UDP-N-acetyl-alpha-D-glucosamine = [(1-&gt;4)-N-acetyl-beta-D-glucosaminyl](n+1) + UDP + H(+). Functionally, polymerizes chitin, a structural polymer of the cell wall and septum, by transferring the sugar moiety of UDP-GlcNAc to the non-reducing end of the growing chitin polymer. The sequence is that of Chitin synthase 1 from Mycosarcoma maydis (Corn smut fungus).